Consider the following 792-residue polypeptide: Type 2 topoisomerase subunit B (792 aa).

In terms of domain architecture, Toprim spans 423–537; the sequence is CEIFLVEGDS…EGYVYIAEPP (115 aa). Mg(2+) contacts are provided by E429, D502, and D504.

This sequence belongs to the type II topoisomerase GyrB family. As to quaternary structure, heterotetramer, composed of two GyrA and two GyrB chains. In the heterotetramer, 'GyrA' contains the active site tyrosine that forms a transient covalent intermediate with DNA, while 'GyrB' binds cofactors and catalyzes ATP hydrolysis. It depends on Mg(2+) as a cofactor. Mn(2+) serves as cofactor. The cofactor is Ca(2+).

The protein resides in the cytoplasm. The catalysed reaction is ATP-dependent breakage, passage and rejoining of double-stranded DNA.. A type II topoisomerase. Despite its similarity to DNA gyrase, this enzyme is not able to supercoil DNA, and instead acts like topoisomerase IV. Relaxes both positively and negatively supercoiled DNA in an ATP-dependent fashion, decatenates interlocked circles. If this subunit is reconstituted with GyrA from E.coli the hybrid enzyme supercoils relaxed plasmid DNA; if paired with E.coli ParC supercoiling is not restored. This the first bacteria shown to not contain DNA gyrase, although it has 2 copies of a reverse gyrase that introduces positive supercoils. Type II topoisomerases break and join 2 DNA strands simultaneously in an ATP-dependent manner. The sequence is that of Type 2 topoisomerase subunit B from Aquifex aeolicus (strain VF5).